Consider the following 357-residue polypeptide: Aminotransferase TOXF (357 aa).

R87 contributes to the pyridoxal 5'-phosphate binding site. The residue at position 188 (K188) is an N6-(pyridoxal phosphate)lysine. Residue E227 coordinates pyridoxal 5'-phosphate.

The protein belongs to the class-IV pyridoxal-phosphate-dependent aminotransferase family. It depends on pyridoxal 5'-phosphate as a cofactor.

It functions in the pathway mycotoxin biosynthesis; HC-toxin biosynthesis. Functionally, aminotransferase, part of the diffuse TOX2 gene cluster that mediates the biosynthesis of the HC-toxin, cyclic tetrapeptide of structure cyclo(D-Pro-L-Ala-D-Ala-L-Aeo), where Aeo stands for 2-amino-9,10-epoxi-8-oxodecanoic acid. HC-toxin is a determinant of specificity and virulence in the interaction between the producing fungus and its host, maize. TOXF contributes to the synthesis of 2-amino-9,10-epoxi-8-oxodecanoic acid, an essential precursor for the production of the major forms of HC-toxin by the non-ribosomal peptide synthetase HTS1. The sequence is that of Aminotransferase TOXF (TOXF) from Cochliobolus carbonum (Maize leaf spot fungus).